Consider the following 466-residue polypeptide: Ribulose bisphosphate carboxylase large chain (466 aa).

At K4 the chain carries N6,N6,N6-trimethyllysine. The substrate site is built by N113 and T163. The active-site Proton acceptor is K165. K167 is a binding site for substrate. K191, D193, and E194 together coordinate Mg(2+). K191 bears the N6-carboxylysine mark. The Proton acceptor role is filled by H284. Substrate contacts are provided by R285, H317, and S369.

This sequence belongs to the RuBisCO large chain family. Type I subfamily. Heterohexadecamer of 8 large chains and 8 small chains; disulfide-linked. The disulfide link is formed within the large subunit homodimers. The cofactor is Mg(2+). In terms of processing, the disulfide bond which can form in the large chain dimeric partners within the hexadecamer appears to be associated with oxidative stress and protein turnover.

Its subcellular location is the plastid. It localises to the chloroplast. It catalyses the reaction 2 (2R)-3-phosphoglycerate + 2 H(+) = D-ribulose 1,5-bisphosphate + CO2 + H2O. The catalysed reaction is D-ribulose 1,5-bisphosphate + O2 = 2-phosphoglycolate + (2R)-3-phosphoglycerate + 2 H(+). Functionally, ruBisCO catalyzes two reactions: the carboxylation of D-ribulose 1,5-bisphosphate, the primary event in carbon dioxide fixation, as well as the oxidative fragmentation of the pentose substrate in the photorespiration process. Both reactions occur simultaneously and in competition at the same active site. The polypeptide is Ribulose bisphosphate carboxylase large chain (Ruttya fruticosa (African azalea)).